The following is a 192-amino-acid chain: dCTP deaminase, dUMP-forming (192 aa).

Residues 101-106 (KSSLGR), Asp119, 127-129 (TLE), Gln148, Tyr162, and Gln174 each bind dCTP. The active-site Proton donor/acceptor is the Glu129. Residues 169–192 (SRYQGQRGPTPSRSWQSWRTWPTR) form a disordered region. Over residues 171–192 (YQGQRGPTPSRSWQSWRTWPTR) the composition is skewed to polar residues.

This sequence belongs to the dCTP deaminase family. As to quaternary structure, homotrimer.

It catalyses the reaction dCTP + 2 H2O = dUMP + NH4(+) + diphosphate. It participates in pyrimidine metabolism; dUMP biosynthesis; dUMP from dCTP: step 1/1. Functionally, bifunctional enzyme that catalyzes both the deamination of dCTP to dUTP and the hydrolysis of dUTP to dUMP without releasing the toxic dUTP intermediate. This Salinispora tropica (strain ATCC BAA-916 / DSM 44818 / JCM 13857 / NBRC 105044 / CNB-440) protein is dCTP deaminase, dUMP-forming.